Here is a 728-residue protein sequence, read N- to C-terminus: 1,4-alpha-glucan branching enzyme GlgB (728 aa).

Aspartate 405 functions as the Nucleophile in the catalytic mechanism. Residue glutamate 458 is the Proton donor of the active site.

Belongs to the glycosyl hydrolase 13 family. GlgB subfamily. In terms of assembly, monomer.

It catalyses the reaction Transfers a segment of a (1-&gt;4)-alpha-D-glucan chain to a primary hydroxy group in a similar glucan chain.. Its pathway is glycan biosynthesis; glycogen biosynthesis. In terms of biological role, catalyzes the formation of the alpha-1,6-glucosidic linkages in glycogen by scission of a 1,4-alpha-linked oligosaccharide from growing alpha-1,4-glucan chains and the subsequent attachment of the oligosaccharide to the alpha-1,6 position. This Salmonella typhi protein is 1,4-alpha-glucan branching enzyme GlgB.